A 222-amino-acid polypeptide reads, in one-letter code: Thiopurine S-methyltransferase (222 aa).

Trp10, Leu45, Glu66, and Arg123 together coordinate S-adenosyl-L-methionine.

The protein belongs to the class I-like SAM-binding methyltransferase superfamily. TPMT family.

The protein resides in the cytoplasm. The catalysed reaction is S-adenosyl-L-methionine + a thiopurine = S-adenosyl-L-homocysteine + a thiopurine S-methylether.. The sequence is that of Thiopurine S-methyltransferase from Pseudomonas fluorescens (strain ATCC BAA-477 / NRRL B-23932 / Pf-5).